Consider the following 120-residue polypeptide: Large ribosomal subunit protein uL22 (120 aa).

The interval 1–20 (MFVNRRYTARGKNLPSSPKK) is disordered.

Belongs to the universal ribosomal protein uL22 family. As to quaternary structure, part of the 50S ribosomal subunit.

This protein binds specifically to 23S rRNA; its binding is stimulated by other ribosomal proteins, e.g. L4, L17, and L20. It is important during the early stages of 50S assembly. It makes multiple contacts with different domains of the 23S rRNA in the assembled 50S subunit and ribosome. Functionally, the globular domain of the protein is located near the polypeptide exit tunnel on the outside of the subunit, while an extended beta-hairpin is found that lines the wall of the exit tunnel in the center of the 70S ribosome. The protein is Large ribosomal subunit protein uL22 of Borrelia turicatae (strain 91E135).